Reading from the N-terminus, the 156-residue chain is MPRRRVVAKREVLPDPKFGNVTLAKFMNHVMISGKKSVAERIVYGALDLVKEKLNKDPLEVFDEALENIAPLVEVKSRRVGGATYQVPVEVRPSRREALAMRWLVEYSRNRGEKSMPQRLAGELIDASQNKGGAVKKREDVHRMAEANKAFSHFRF.

The protein belongs to the universal ribosomal protein uS7 family. In terms of assembly, part of the 30S ribosomal subunit. Contacts proteins S9 and S11.

Functionally, one of the primary rRNA binding proteins, it binds directly to 16S rRNA where it nucleates assembly of the head domain of the 30S subunit. Is located at the subunit interface close to the decoding center, probably blocks exit of the E-site tRNA. The protein is Small ribosomal subunit protein uS7 of Teredinibacter turnerae (strain ATCC 39867 / T7901).